The chain runs to 463 residues: uncharacterized protein (463 aa).

This is an uncharacterized protein from Ostreid herpesvirus 1 (isolate France) (OsHV-1).